The sequence spans 200 residues: 3-isopropylmalate dehydratase small subunit (200 aa).

Belongs to the LeuD family. LeuD type 1 subfamily. Heterodimer of LeuC and LeuD.

It carries out the reaction (2R,3S)-3-isopropylmalate = (2S)-2-isopropylmalate. It participates in amino-acid biosynthesis; L-leucine biosynthesis; L-leucine from 3-methyl-2-oxobutanoate: step 2/4. In terms of biological role, catalyzes the isomerization between 2-isopropylmalate and 3-isopropylmalate, via the formation of 2-isopropylmaleate. This chain is 3-isopropylmalate dehydratase small subunit, found in Actinobacillus pleuropneumoniae serotype 3 (strain JL03).